A 247-amino-acid chain; its full sequence is ATP synthase subunit a, chloroplastic (247 aa).

5 helical membrane passes run 38 to 58 (QVLI…IIAV), 95 to 115 (VPFI…GALL), 134 to 154 (INTT…AGLS), 199 to 219 (LVVV…VMFL), and 220 to 240 (GLFT…AYIG).

Belongs to the ATPase A chain family. F-type ATPases have 2 components, CF(1) - the catalytic core - and CF(0) - the membrane proton channel. CF(1) has five subunits: alpha(3), beta(3), gamma(1), delta(1), epsilon(1). CF(0) has four main subunits: a, b, b' and c.

It localises to the plastid. The protein localises to the chloroplast thylakoid membrane. Its function is as follows. Key component of the proton channel; it plays a direct role in the translocation of protons across the membrane. This chain is ATP synthase subunit a, chloroplastic, found in Zea mays (Maize).